The sequence spans 210 residues: Proteasome subunit beta (210 aa).

The propeptide at 1–9 is removed in mature form; by autocatalysis; that stretch reads MDNDKHLKG. Thr-10 (nucleophile) is an active-site residue.

This sequence belongs to the peptidase T1B family. As to quaternary structure, the 20S proteasome core is composed of 14 alpha and 14 beta subunits that assemble into four stacked heptameric rings, resulting in a barrel-shaped structure. The two inner rings, each composed of seven catalytic beta subunits, are sandwiched by two outer rings, each composed of seven alpha subunits. The catalytic chamber with the active sites is on the inside of the barrel. Has a gated structure, the ends of the cylinder being occluded by the N-termini of the alpha-subunits. Is capped at one or both ends by the proteasome regulatory ATPase, PAN.

It localises to the cytoplasm. It carries out the reaction Cleavage of peptide bonds with very broad specificity.. The formation of the proteasomal ATPase PAN-20S proteasome complex, via the docking of the C-termini of PAN into the intersubunit pockets in the alpha-rings, triggers opening of the gate for substrate entry. Interconversion between the open-gate and close-gate conformations leads to a dynamic regulation of the 20S proteasome proteolysis activity. Functionally, component of the proteasome core, a large protease complex with broad specificity involved in protein degradation. The chain is Proteasome subunit beta from Methanococcoides burtonii (strain DSM 6242 / NBRC 107633 / OCM 468 / ACE-M).